We begin with the raw amino-acid sequence, 156 residues long: Large ribosomal subunit protein eL24 (156 aa).

Positions 110–129 (KESKAKKQETQAAKKAEKAK) are enriched in basic and acidic residues. Residues 110–156 (KESKAKKQETQAAKKAEKAKNAANPKARVTSKQGAKGAPVKVAAKSR) are disordered. Over residues 130-156 (NAANPKARVTSKQGAKGAPVKVAAKSR) the composition is skewed to low complexity.

Belongs to the eukaryotic ribosomal protein eL24 family. As to quaternary structure, component of the large ribosomal subunit (LSU). Mature N.crassa ribosomes consist of a small (40S) and a large (60S) subunit. The 40S small subunit contains 1 molecule of ribosomal RNA (18S rRNA) and at least 32 different proteins. The large 60S subunit contains 3 rRNA molecules (26S, 5.8S and 5S rRNA) and at least 42 different proteins.

Its subcellular location is the cytoplasm. In terms of biological role, component of the ribosome, a large ribonucleoprotein complex responsible for the synthesis of proteins in the cell. The small ribosomal subunit (SSU) binds messenger RNAs (mRNAs) and translates the encoded message by selecting cognate aminoacyl-transfer RNA (tRNA) molecules. The large subunit (LSU) contains the ribosomal catalytic site termed the peptidyl transferase center (PTC), which catalyzes the formation of peptide bonds, thereby polymerizing the amino acids delivered by tRNAs into a polypeptide chain. The nascent polypeptides leave the ribosome through a tunnel in the LSU and interact with protein factors that function in enzymatic processing, targeting, and the membrane insertion of nascent chains at the exit of the ribosomal tunnel. The sequence is that of Large ribosomal subunit protein eL24 (rpl-24) from Neurospora crassa (strain ATCC 24698 / 74-OR23-1A / CBS 708.71 / DSM 1257 / FGSC 987).